A 340-amino-acid polypeptide reads, in one-letter code: MSRKFMQVYEYDREQYLDEFIEDRYNDSFIASPEYYSAEKYMCRYTILNHNCVNVRRCALDSKLLHDIITNCKIYNNIELVRATKFVYYLDLIKCNWVSKVGDSVLYPVIFITHTSTRNLDKVSVKTYKGVKVKKLNRCADHAIVINPFVKFKLTLPNKTSHAKVLVTFCKLRTDIMPIEAPYPGNVLVYTFPDIHKRIPGYIHINIEGCIDGIIYINSSKFSCVLKLHRSMYRIPPFPIDICSCCSQYTNDDIEIPIHDLIKDVVIFKNKEMVYYLKLNNKTIARFTYFNNIDTAITQEHKYVKIALGIVCKLMINNMHSIVGVNHSNTFVNCLLEDNV.

This sequence belongs to the orthopoxvirus B17 protein family.

In Variola virus (isolate Human/India/Ind3/1967) (VARV), this protein is Protein B17.